Consider the following 178-residue polypeptide: Ribosome maturation factor RimM (178 aa).

In terms of domain architecture, PRC barrel spans 101 to 178 (ADEYYWYQLV…VMRVEWDADF (78 aa)).

Belongs to the RimM family. Binds ribosomal protein uS19.

It localises to the cytoplasm. An accessory protein needed during the final step in the assembly of 30S ribosomal subunit, possibly for assembly of the head region. Essential for efficient processing of 16S rRNA. May be needed both before and after RbfA during the maturation of 16S rRNA. It has affinity for free ribosomal 30S subunits but not for 70S ribosomes. The polypeptide is Ribosome maturation factor RimM (Pseudomonas putida (strain ATCC 47054 / DSM 6125 / CFBP 8728 / NCIMB 11950 / KT2440)).